The following is a 242-amino-acid chain: tRNA (guanine-N(1)-)-methyltransferase (242 aa).

S-adenosyl-L-methionine contacts are provided by residues Gly111 and 130-135; that span reads IGDYVL.

It belongs to the RNA methyltransferase TrmD family. In terms of assembly, homodimer.

The protein resides in the cytoplasm. The enzyme catalyses guanosine(37) in tRNA + S-adenosyl-L-methionine = N(1)-methylguanosine(37) in tRNA + S-adenosyl-L-homocysteine + H(+). Functionally, specifically methylates guanosine-37 in various tRNAs. In Aster yellows witches'-broom phytoplasma (strain AYWB), this protein is tRNA (guanine-N(1)-)-methyltransferase.